Consider the following 175-residue polypeptide: ATP synthase subunit b 2 (175 aa).

Residues 20–40 (LIFWTAVTFVIVLLILKKFAW) traverse the membrane as a helical segment.

This sequence belongs to the ATPase B chain family. In terms of assembly, F-type ATPases have 2 components, F(1) - the catalytic core - and F(0) - the membrane proton channel. F(1) has five subunits: alpha(3), beta(3), gamma(1), delta(1), epsilon(1). F(0) has four main subunits: a(1), b(2) and c(10-14). The alpha and beta chains form an alternating ring which encloses part of the gamma chain. F(1) is attached to F(0) by a central stalk formed by the gamma and epsilon chains, while a peripheral stalk is formed by the delta and b chains.

Its subcellular location is the cell inner membrane. Functionally, f(1)F(0) ATP synthase produces ATP from ADP in the presence of a proton or sodium gradient. F-type ATPases consist of two structural domains, F(1) containing the extramembraneous catalytic core and F(0) containing the membrane proton channel, linked together by a central stalk and a peripheral stalk. During catalysis, ATP synthesis in the catalytic domain of F(1) is coupled via a rotary mechanism of the central stalk subunits to proton translocation. Its function is as follows. Component of the F(0) channel, it forms part of the peripheral stalk, linking F(1) to F(0). This is ATP synthase subunit b 2 from Prosthecochloris aestuarii (strain DSM 271 / SK 413).